A 337-amino-acid polypeptide reads, in one-letter code: UDP-3-O-acylglucosamine N-acyltransferase 2 (337 aa).

The active-site Proton acceptor is the His-238.

Belongs to the transferase hexapeptide repeat family. LpxD subfamily. As to quaternary structure, homotrimer.

It carries out the reaction a UDP-3-O-[(3R)-3-hydroxyacyl]-alpha-D-glucosamine + a (3R)-hydroxyacyl-[ACP] = a UDP-2-N,3-O-bis[(3R)-3-hydroxyacyl]-alpha-D-glucosamine + holo-[ACP] + H(+). It functions in the pathway bacterial outer membrane biogenesis; LPS lipid A biosynthesis. Catalyzes the N-acylation of UDP-3-O-acylglucosamine using 3-hydroxyacyl-ACP as the acyl donor. Is involved in the biosynthesis of lipid A, a phosphorylated glycolipid that anchors the lipopolysaccharide to the outer membrane of the cell. The sequence is that of UDP-3-O-acylglucosamine N-acyltransferase 2 from Francisella tularensis subsp. tularensis (strain FSC 198).